The chain runs to 316 residues: Retinol dehydrogenase 12 (316 aa).

46–52 is a binding site for NADP(+); sequence GANTGIG. Ser175 provides a ligand contact to substrate. The active-site Proton acceptor is Tyr200.

It belongs to the short-chain dehydrogenases/reductases (SDR) family. In terms of tissue distribution, expressed in the retina.

The catalysed reaction is all-trans-retinol + NADP(+) = all-trans-retinal + NADPH + H(+). It catalyses the reaction 11-cis-retinol + NADP(+) = 11-cis-retinal + NADPH + H(+). The enzyme catalyses 9-cis-retinol + NADP(+) = 9-cis-retinal + NADPH + H(+). It carries out the reaction a 4-hydroxynonen-1-ol + NADP(+) = a 4-hydroxynonenal + NADPH + H(+). The catalysed reaction is (E)-non-2-en-1-ol + NADP(+) = (E)-non-2-enal + NADPH + H(+). It catalyses the reaction (Z)-non-6-en-1-ol + NADP(+) = (Z)-non-6-enal + NADPH + H(+). The enzyme catalyses nonan-1-ol + NADP(+) = nonanal + NADPH + H(+). Its pathway is cofactor metabolism; retinol metabolism. Its function is as follows. Retinoids dehydrogenase/reductase with a clear preference for NADP. Displays high activity towards 9-cis, 11-cis and all-trans-retinal. Shows very weak activity towards 13-cis-retinol. Also exhibits activity, albeit with lower affinity than for retinaldehydes, towards lipid peroxidation products (C9 aldehydes) such as 4-hydroxynonenal and trans-2-nonenal. May play an important function in photoreceptor cells to detoxify 4-hydroxynonenal and potentially other toxic aldehyde products resulting from lipid peroxidation. Has no dehydrogenase activity towards steroids. In Bos taurus (Bovine), this protein is Retinol dehydrogenase 12 (RDH12).